A 987-amino-acid chain; its full sequence is Pentatricopeptide repeat-containing protein At1g06710, mitochondrial (987 aa).

The N-terminal 42 residues, 1 to 42, are a transit peptide targeting the mitochondrion; the sequence is MNKTVVRCLLSRSHHPLIHFSTNLSLLHRVFTCSRYLTARFM. 22 PPR repeats span residues 164–198, 199–233, 234–268, 269–299, 301–335, 336–370, 371–405, 406–446, 447–481, 482–516, 517–551, 552–586, 587–621, 638–672, 673–707, 708–742, 743–777, 778–812, 813–847, 881–915, 918–952, and 953–987; these read TAPV…DKEV, FGEF…RFRP, SRST…NLRM, DGFT…ENFV, DTVF…SCLP, NVVT…GCYP, SPKI…GHMP, GYVV…GVVL, NKIN…GFIP, DTST…GLVA, DVYT…GCTP, NVVT…GCLP, NIVT…KDVP, NVVT…GCEP, NQIV…GFPA, TLYT…SCAP, NVVI…GCQP, NVVT…GVAP, NYVT…HWPT, FLSV…SATL, YSST…GVIP, and EMQS…VCPL.

This sequence belongs to the PPR family. P subfamily.

It localises to the mitochondrion. This chain is Pentatricopeptide repeat-containing protein At1g06710, mitochondrial, found in Arabidopsis thaliana (Mouse-ear cress).